A 189-amino-acid polypeptide reads, in one-letter code: Transcription factor FapR (189 aa).

It belongs to the FapR family.

Functionally, transcriptional factor involved in regulation of membrane lipid biosynthesis by repressing genes involved in fatty acid and phospholipid metabolism. This Listeria welshimeri serovar 6b (strain ATCC 35897 / DSM 20650 / CCUG 15529 / CIP 8149 / NCTC 11857 / SLCC 5334 / V8) protein is Transcription factor FapR.